An 89-amino-acid chain; its full sequence is Barrier-to-autointegration factor (89 aa).

Residue M1 is modified to N-acetylmethionine. The residue at position 2 (T2) is an N-acetylthreonine; in Barrier-to-autointegration factor, N-terminally processed. Residues T2 and T3 each carry the phosphothreonine; by VRK1 and VRK2 modification. A Phosphoserine; by VRK1 and VRK2 modification is found at S4. Residues V20–E35 form the HhH domain.

This sequence belongs to the BAF family. Homodimer. Heterodimerizes with BANF2. Interacts with ANKLE2/LEM4, leading to decreased phosphorylation by VRK1 and promoting dephosphorylation by protein phosphatase 2A (PP2A). Binds non-specifically to double-stranded DNA, and is found as a hexamer or dodecamer upon DNA binding. Binds to LEM domain-containing nuclear proteins such as LEMD3/MAN1, TMPO/LAP2 and EMD (emerin). Interacts with ANKLE1 (via LEM domain); the interaction may favor BANF1 dimerization. Interacts with CRX and LMNA (lamin-A). Binds linker histone H1.1 and core histones H3. Interacts with LEMD2 (via LEM domain). Interacts with PARP1; interaction takes place in response to oxidative DNA damage. In terms of processing, ser-4 is the major site of phosphorylation as compared to Thr-2 and Thr-3. Phosphorylation on Thr-2; Thr-3 and Ser-4 disrupts its ability to bind DNA and reduces its ability to bind LEM domain-containing proteins. Non phosphorylated BAF seems to enhance binding between EMD and LMNA. Dephosphorylated by protein phosphatase 2A (PP2A) following interaction with ANKLE2/LEM4 during mitotic exit, leading to mitotic nuclear envelope reassembly.

The protein resides in the nucleus. Its subcellular location is the chromosome. It localises to the nucleus envelope. The protein localises to the cytoplasm. In terms of biological role, non-specific DNA-binding protein that plays key roles in mitotic nuclear reassembly, chromatin organization, DNA damage response, gene expression and intrinsic immunity against foreign DNA. Contains two non-specific double-stranded DNA (dsDNA)-binding sites which promote DNA cross-bridging. Plays a key role in nuclear membrane reformation at the end of mitosis by driving formation of a single nucleus in a spindle-independent manner. Transiently cross-bridges anaphase chromosomes via its ability to bridge distant DNA sites, leading to the formation of a dense chromatin network at the chromosome ensemble surface that limits membranes to the surface. Also acts as a negative regulator of innate immune activation by restricting CGAS activity toward self-DNA upon acute loss of nuclear membrane integrity. Outcompetes CGAS for DNA-binding, thereby preventing CGAS activation and subsequent damaging autoinflammatory responses. Also involved in DNA damage response: interacts with PARP1 in response to oxidative stress, thereby inhibiting the ADP-ribosyltransferase activity of PARP1. Involved in the recognition of exogenous dsDNA in the cytosol: associates with exogenous dsDNA immediately after its appearance in the cytosol at endosome breakdown and is required to avoid autophagy. The sequence is that of Barrier-to-autointegration factor from Mus musculus (Mouse).